We begin with the raw amino-acid sequence, 282 residues long: Orotidine 5'-phosphate decarboxylase (282 aa).

Residue lysine 95 is the Proton donor of the active site.

This sequence belongs to the OMP decarboxylase family. Type 2 subfamily.

The catalysed reaction is orotidine 5'-phosphate + H(+) = UMP + CO2. The protein operates within pyrimidine metabolism; UMP biosynthesis via de novo pathway; UMP from orotate: step 2/2. The chain is Orotidine 5'-phosphate decarboxylase from Polaromonas naphthalenivorans (strain CJ2).